A 269-amino-acid chain; its full sequence is MSKVIKKRVETSPRPTASSDSLQTCAGVIEYAKSISKSNAKCIEYVTLNASQYANCSSISIKLTDSLSSQMTSTFIMLEGETKLYKNKSKQDRSDGYFLKIKVTAASPMLYQLLEAVYGNIKHKERIPNSLHSLSVETITEKTFKDESIFINKLNGAMVEYVSTGESSILRSIEGELESLSKRERQLAKAIITPVVFYRSGTETKITFALKKLIIDREVVANVIGLSGDSERVSMTENVEEDLARNLGLVDIDDEYDEDSDKEKPIFNV.

Belongs to the orthopoxvirus OPG079 family. In terms of assembly, homoomultimer (Potential). Interacts with the small subunit of ribonucleotide reductase. Interacts with host FAM111A; this interaction protomtes OPG079 degradation through autophagy.

The protein resides in the host cytoplasm. Plays an essential role in viral DNA replication. Binds to ssDNA with high affinity and localizes to cytoplasmic factories where nascent viral genomes accumulate. May disrupt loops, hairpins and other secondary structures present on ssDNA to reduce and eliminate pausing of viral DNA polymerase at specific sites during elongation. The polypeptide is Protein OPG079 (OPG079) (Bos taurus (Bovine)).